The following is a 107-amino-acid chain: Nucleoid-associated protein A1E_05550 (107 aa).

It belongs to the YbaB/EbfC family. As to quaternary structure, homodimer.

The protein localises to the cytoplasm. The protein resides in the nucleoid. Functionally, binds to DNA and alters its conformation. May be involved in regulation of gene expression, nucleoid organization and DNA protection. The protein is Nucleoid-associated protein A1E_05550 of Rickettsia canadensis (strain McKiel).